Here is a 573-residue protein sequence, read N- to C-terminus: Potassium-transporting ATPase potassium-binding subunit (573 aa).

Transmembrane regions (helical) follow at residues 3-23 (AEGL…TPLL), 65-85 (GYTL…YALL), 136-156 (GLTV…VALI), 179-199 (LYVL…QGVP), 254-274 (LTNL…IYSF), 286-306 (ALWT…WWAE), 383-403 (AGLY…GLMV), 423-443 (VIAV…TTVV), 489-509 (GLGL…LAIA), and 531-551 (LFIT…FFPA).

It belongs to the KdpA family. As to quaternary structure, the system is composed of three essential subunits: KdpA, KdpB and KdpC.

It localises to the cell inner membrane. Functionally, part of the high-affinity ATP-driven potassium transport (or Kdp) system, which catalyzes the hydrolysis of ATP coupled with the electrogenic transport of potassium into the cytoplasm. This subunit binds the periplasmic potassium ions and delivers the ions to the membrane domain of KdpB through an intramembrane tunnel. The chain is Potassium-transporting ATPase potassium-binding subunit from Rhodospirillum centenum (strain ATCC 51521 / SW).